The chain runs to 377 residues: Probable G-protein coupled receptor 27 (377 aa).

At 1-24 (MANASEPGGGGGGAEAAALGLRLA) the chain is on the extracellular side. A glycan (N-linked (GlcNAc...) asparagine) is linked at asparagine 3. Residues 25–45 (TLSLLLCVSLAGNVLFALLIV) traverse the membrane as a helical segment. Residues 46–56 (RERSLHRAPYY) lie on the Cytoplasmic side of the membrane. The chain crosses the membrane as a helical span at residues 57 to 77 (LLLDLCLADGLRALACLPAVM). Topologically, residues 78 to 98 (LAARRAAAAAGTPPGALGCKL) are extracellular. Cysteines 96 and 173 form a disulfide. The helical transmembrane segment at 99–119 (LAFLAALFCFHAAFLLLGVGV) threads the bilayer. Residues 120–140 (TRYLAIAHHRFYAERLAGWPC) are Cytoplasmic-facing. Residues 141–161 (AAMLVCAAWALALAAAFPPVL) form a helical membrane-spanning segment. The Extracellular portion of the chain corresponds to 162 to 183 (DGGGADDEDAPCALEQRPDGAP). Residues 184–204 (GALGFLLLLAAVVGATHLVYL) form a helical membrane-spanning segment. Topologically, residues 205 to 287 (RLLFFIHDRR…FKTEKRLCKM (83 aa)) are cytoplasmic. A helical membrane pass occupies residues 288-308 (FYAITLLFLLLWGPYVVASYL). Residues 309–322 (RVLVRPGAVPQAYL) lie on the Extracellular side of the membrane. A helical transmembrane segment spans residues 323 to 343 (TASVWLTFAQAGINPVVCFLF). Over 344–377 (NRELRDCFRAQFPCCQSPQATQATLPCDLKGIGL) the chain is Cytoplasmic.

It belongs to the G-protein coupled receptor 1 family. Expressed as a 3.0 kb transcript, in whole brain, hippocampus, striatum, frontal cortex, thalamus, pons and hypothalamus. A lower molecular weight transcript was detected in all regions examined, except the hypothalamus.

It localises to the cell membrane. Its function is as follows. Orphan receptor. Possible candidate for amine-like G-protein coupled receptor. This is Probable G-protein coupled receptor 27 (Gpr27) from Rattus norvegicus (Rat).